Here is a 93-residue protein sequence, read N- to C-terminus: uncharacterized protein (93 aa).

3 helical membrane passes run 9 to 29 (ITVI…PQLI), 40 to 60 (ISLA…IYGI), and 66 to 86 (PIIV…YLKI).

It is found in the cell membrane. This is an uncharacterized protein from Methanocaldococcus jannaschii (strain ATCC 43067 / DSM 2661 / JAL-1 / JCM 10045 / NBRC 100440) (Methanococcus jannaschii).